Consider the following 249-residue polypeptide: ATP synthase subunit a, chloroplastic (249 aa).

5 helical membrane passes run 38–58 (AQVLITSWIVIAILLSLAVLA), 97–117 (VPFIGTMFLFIFVSNWSGALL), 136–156 (INTTVALALLTSVAYFYAGLH), 201–221 (LVVAVLISLVPLVVPIPMMFL), and 222–242 (GLFTSAIQALIFATLAAAYIG).

Belongs to the ATPase A chain family. F-type ATPases have 2 components, CF(1) - the catalytic core - and CF(0) - the membrane proton channel. CF(1) has five subunits: alpha(3), beta(3), gamma(1), delta(1), epsilon(1). CF(0) has four main subunits: a, b, b' and c.

The protein resides in the plastid. It is found in the chloroplast thylakoid membrane. Key component of the proton channel; it plays a direct role in the translocation of protons across the membrane. The polypeptide is ATP synthase subunit a, chloroplastic (Physcomitrium patens (Spreading-leaved earth moss)).